A 433-amino-acid polypeptide reads, in one-letter code: Pyrimidine-nucleoside phosphorylase (433 aa).

A phosphate-binding site is contributed by 81–83; it reads KHS. 2 residues coordinate K(+): G88 and T90. Residues T92, 108–110, and T120 each bind phosphate; that span reads KMS. Residues R168 and K187 each contribute to the substrate site. 3 residues coordinate K(+): L243, A246, and E255.

This sequence belongs to the thymidine/pyrimidine-nucleoside phosphorylase family. In terms of assembly, homodimer. K(+) serves as cofactor.

It carries out the reaction uridine + phosphate = alpha-D-ribose 1-phosphate + uracil. The enzyme catalyses thymidine + phosphate = 2-deoxy-alpha-D-ribose 1-phosphate + thymine. It catalyses the reaction 2'-deoxyuridine + phosphate = 2-deoxy-alpha-D-ribose 1-phosphate + uracil. In terms of biological role, catalyzes phosphorolysis of the pyrimidine nucleosides uridine, thymidine and 2'-deoxyuridine with the formation of the corresponding pyrimidine base and ribose-1-phosphate. In Geobacillus stearothermophilus (Bacillus stearothermophilus), this protein is Pyrimidine-nucleoside phosphorylase (pdp).